A 138-amino-acid chain; its full sequence is Ribulose bisphosphate carboxylase small subunit (138 aa).

The protein belongs to the RuBisCO small chain family. In terms of assembly, heterohexadecamer of 8 large and 8 small subunits.

The protein localises to the plastid. Its subcellular location is the chloroplast. RuBisCO catalyzes two reactions: the carboxylation of D-ribulose 1,5-bisphosphate, the primary event in carbon dioxide fixation, as well as the oxidative fragmentation of the pentose substrate in the photorespiration process. Both reactions occur simultaneously and in competition at the same active site. Although the small subunit is not catalytic it is essential for maximal activity. Carbon dioxide and oxygen bind in the same pocket of the enzyme in a similar manner. The sequence is that of Ribulose bisphosphate carboxylase small subunit from Galdieria sulphuraria (Red alga).